The chain runs to 593 residues: Probable E3 ubiquitin-protein ligase ARI2 (593 aa).

The segment at 120–334 is TRIAD supradomain; the sequence is SMMSCDICVE…ISGHSCGRFQ (215 aa). Positions 124, 127, 141, 143, 146, 149, 168, 173, 215, 221, 237, 239, 244, 247, 252, 257, 284, and 287 each coordinate Zn(2+). Residues 124–173 form an RING-type 1 zinc finger; sequence CDICVEDVPGYQLTRMDCGHSFCNNCWTGHFTVKINEGQSKRIICMAHKC. The IBR-type zinc-finger motif lies at 195–257; the sequence is EKFDRFLLES…SSQAHSPCSC (63 aa). Residues 284-312 form an RING-type 2; atypical zinc finger; it reads CPKCHKPVEKNGGCNLVTCLCRQSFCWLC. Cys-297 is a catalytic residue. 6 residues coordinate Zn(2+): Cys-302, Cys-304, Cys-309, Cys-312, His-320, and Cys-330.

Belongs to the RBR family. Ariadne subfamily. Requires Zn(2+) as cofactor. In terms of tissue distribution, ubiquitous.

It catalyses the reaction [E2 ubiquitin-conjugating enzyme]-S-ubiquitinyl-L-cysteine + [acceptor protein]-L-lysine = [E2 ubiquitin-conjugating enzyme]-L-cysteine + [acceptor protein]-N(6)-ubiquitinyl-L-lysine.. Its pathway is protein modification; protein ubiquitination. Might act as an E3 ubiquitin-protein ligase, or as part of E3 complex, which accepts ubiquitin from specific E2 ubiquitin-conjugating enzymes and then transfers it to substrates. In Arabidopsis thaliana (Mouse-ear cress), this protein is Probable E3 ubiquitin-protein ligase ARI2 (ARI2).